The primary structure comprises 287 residues: Undecaprenyl-diphosphatase (287 aa).

7 helical membrane passes run 6–26 (LHLLKAFFLGIVEGLTEFIPV), 45–65 (SGKVFEVVIQFGSILAVMWIF), 89–109 (NLLLAFLPAAVIGAIFIKSIK), 111–131 (VFYHPGVVAVTLVVGGFIMLW), 204–224 (ATEFSFFLAMPTMLGAAVYDL), 238–258 (AIAVGFVAAFLSALVVVRAVL), and 266–286 (YRVFAWYRIALGLVVAAWIYA).

This sequence belongs to the UppP family.

The protein localises to the cell inner membrane. It catalyses the reaction di-trans,octa-cis-undecaprenyl diphosphate + H2O = di-trans,octa-cis-undecaprenyl phosphate + phosphate + H(+). Catalyzes the dephosphorylation of undecaprenyl diphosphate (UPP). Confers resistance to bacitracin. The polypeptide is Undecaprenyl-diphosphatase (Bordetella bronchiseptica (strain ATCC BAA-588 / NCTC 13252 / RB50) (Alcaligenes bronchisepticus)).